A 731-amino-acid polypeptide reads, in one-letter code: Alpha-catulin (731 aa).

Serine 373 and serine 537 each carry phosphoserine. The segment at 535-559 (HLSLPKPTKNSANLKSLKPDKPDSE) is disordered.

Belongs to the vinculin/alpha-catenin family. Interacts with ARHGEF1. Interacts with Dtna. The interaction is required for correct localization of both Ctnnal1 and Dtna.

The protein resides in the cytoplasm. Its subcellular location is the cytoskeleton. It localises to the cell membrane. Functionally, may modulate the Rho pathway signaling by providing a scaffold for the Lbc Rho guanine nucleotide exchange factor (ARHGEF1). In Mus musculus (Mouse), this protein is Alpha-catulin (Ctnnal1).